Reading from the N-terminus, the 428-residue chain is GTPase Obg (428 aa).

In terms of domain architecture, Obg spans Met-1–Leu-158. The OBG-type G domain occupies Ala-159–Ser-330. GTP contacts are provided by residues Gly-165–Ser-172, Phe-190–Glu-194, Asp-212–Gly-215, Asn-282–Asp-285, and Ser-311–Leu-313. Ser-172 and Thr-192 together coordinate Mg(2+). The region spanning Glu-349–Glu-428 is the OCT domain.

The protein belongs to the TRAFAC class OBG-HflX-like GTPase superfamily. OBG GTPase family. Monomer. The cofactor is Mg(2+).

The protein resides in the cytoplasm. Its function is as follows. An essential GTPase which binds GTP, GDP and possibly (p)ppGpp with moderate affinity, with high nucleotide exchange rates and a fairly low GTP hydrolysis rate. Plays a role in control of the cell cycle, stress response, ribosome biogenesis and in those bacteria that undergo differentiation, in morphogenesis control. This chain is GTPase Obg, found in Fusobacterium nucleatum subsp. nucleatum (strain ATCC 25586 / DSM 15643 / BCRC 10681 / CIP 101130 / JCM 8532 / KCTC 2640 / LMG 13131 / VPI 4355).